Reading from the N-terminus, the 858-residue chain is DNA mismatch repair protein MutS (858 aa).

613–620 (GPNMAGKS) serves as a coordination point for ATP.

The protein belongs to the DNA mismatch repair MutS family.

Its function is as follows. This protein is involved in the repair of mismatches in DNA. It is possible that it carries out the mismatch recognition step. This protein has a weak ATPase activity. This is DNA mismatch repair protein MutS from Dehalococcoides mccartyi (strain ATCC BAA-2266 / KCTC 15142 / 195) (Dehalococcoides ethenogenes (strain 195)).